The primary structure comprises 446 residues: Na(+)-translocating NADH-quinone reductase subunit A (446 aa).

The protein belongs to the NqrA family. Composed of six subunits; NqrA, NqrB, NqrC, NqrD, NqrE and NqrF.

It carries out the reaction a ubiquinone + n Na(+)(in) + NADH + H(+) = a ubiquinol + n Na(+)(out) + NAD(+). In terms of biological role, NQR complex catalyzes the reduction of ubiquinone-1 to ubiquinol by two successive reactions, coupled with the transport of Na(+) ions from the cytoplasm to the periplasm. NqrA to NqrE are probably involved in the second step, the conversion of ubisemiquinone to ubiquinol. In Histophilus somni (strain 129Pt) (Haemophilus somnus), this protein is Na(+)-translocating NADH-quinone reductase subunit A.